The following is a 128-amino-acid chain: Small ribosomal subunit protein uS11 (128 aa).

Belongs to the universal ribosomal protein uS11 family. As to quaternary structure, part of the 30S ribosomal subunit. Interacts with proteins S7 and S18. Binds to IF-3.

Located on the platform of the 30S subunit, it bridges several disparate RNA helices of the 16S rRNA. Forms part of the Shine-Dalgarno cleft in the 70S ribosome. The polypeptide is Small ribosomal subunit protein uS11 (Chromohalobacter salexigens (strain ATCC BAA-138 / DSM 3043 / CIP 106854 / NCIMB 13768 / 1H11)).